A 428-amino-acid polypeptide reads, in one-letter code: D-amino acid dehydrogenase (428 aa).

3 to 17 (VVILGSGVVGVASAY) is a binding site for FAD.

It belongs to the DadA oxidoreductase family. FAD is required as a cofactor.

The enzyme catalyses a D-alpha-amino acid + A + H2O = a 2-oxocarboxylate + AH2 + NH4(+). Its pathway is amino-acid degradation; D-alanine degradation; NH(3) and pyruvate from D-alanine: step 1/1. Functionally, oxidative deamination of D-amino acids. In Burkholderia lata (strain ATCC 17760 / DSM 23089 / LMG 22485 / NCIMB 9086 / R18194 / 383), this protein is D-amino acid dehydrogenase.